The sequence spans 1712 residues: U3 small nucleolar RNA-associated protein 10 (1712 aa).

HEAT repeat units follow at residues glutamate 164–glutamate 202, threonine 490–serine 528, threonine 564–glycine 605, threonine 987–histidine 1025, valine 1236–lysine 1275, glutamate 1605–alanine 1646, and leucine 1667–glutamate 1705.

It belongs to the HEATR1/UTP10 family. As to quaternary structure, component of the ribosomal small subunit (SSU) processome.

The protein localises to the nucleus. It is found in the nucleolus. Involved in nucleolar processing of pre-18S ribosomal RNA. Involved in ribosome biosynthesis. This chain is U3 small nucleolar RNA-associated protein 10, found in Phaeosphaeria nodorum (strain SN15 / ATCC MYA-4574 / FGSC 10173) (Glume blotch fungus).